Consider the following 416-residue polypeptide: Cell division protein FtsZ (416 aa).

Residues 20–24 (GGGVN), 107–109 (GTG), E138, R142, and D186 each bind GTP. The span at 319 to 335 (QETNANNSSPAQRQAES) shows a compositional bias: polar residues. Residues 319-416 (QETNANNSSP…DSLDFPDFLK (98 aa)) form a disordered region. Residues 376-392 (QDDDIPDDAGFDVDLPA) show a composition bias toward acidic residues. The span at 404–416 (ARKDSLDFPDFLK) shows a compositional bias: basic and acidic residues.

Belongs to the FtsZ family. In terms of assembly, homodimer. Polymerizes to form a dynamic ring structure in a strictly GTP-dependent manner. Interacts directly with several other division proteins.

It localises to the cytoplasm. Essential cell division protein that forms a contractile ring structure (Z ring) at the future cell division site. The regulation of the ring assembly controls the timing and the location of cell division. One of the functions of the FtsZ ring is to recruit other cell division proteins to the septum to produce a new cell wall between the dividing cells. Binds GTP and shows GTPase activity. In Kocuria rhizophila (strain ATCC 9341 / DSM 348 / NBRC 103217 / DC2201), this protein is Cell division protein FtsZ.